The chain runs to 120 residues: Large ribosomal subunit protein uL18 (120 aa).

It belongs to the universal ribosomal protein uL18 family. As to quaternary structure, part of the 50S ribosomal subunit; part of the 5S rRNA/L5/L18/L25 subcomplex. Contacts the 5S and 23S rRNAs.

In terms of biological role, this is one of the proteins that bind and probably mediate the attachment of the 5S RNA into the large ribosomal subunit, where it forms part of the central protuberance. The protein is Large ribosomal subunit protein uL18 of Clostridium botulinum (strain Eklund 17B / Type B).